Here is a 217-residue protein sequence, read N- to C-terminus: Small ribosomal subunit protein uS3 (217 aa).

The KH type-2 domain maps to 40–110 (IRDLINKWFN…EVYINIHEVR (71 aa)).

This sequence belongs to the universal ribosomal protein uS3 family. As to quaternary structure, part of the 30S ribosomal subunit. Forms a tight complex with proteins S10 and S14.

Functionally, binds the lower part of the 30S subunit head. Binds mRNA in the 70S ribosome, positioning it for translation. The protein is Small ribosomal subunit protein uS3 of Rickettsia prowazekii (strain Madrid E).